Consider the following 219-residue polypeptide: Alpha N-terminal protein methyltransferase 1 (219 aa).

S-adenosyl-L-methionine-binding positions include Gly64, Arg69, 111–112 (LQ), and Gln127.

The protein belongs to the methyltransferase superfamily. NTM1 family.

Its subcellular location is the cytoplasm. The catalysed reaction is N-terminal L-alanyl-L-prolyl-L-lysyl-[protein] + 3 S-adenosyl-L-methionine = N-terminal N,N,N-trimethyl-L-alanyl-L-prolyl-L-lysyl-[protein] + 3 S-adenosyl-L-homocysteine + 3 H(+). It catalyses the reaction N-terminal L-seryl-L-prolyl-L-lysyl-[protein] + 3 S-adenosyl-L-methionine = N-terminal N,N,N-trimethyl-L-seryl-L-prolyl-L-lysyl-[protein] + 3 S-adenosyl-L-homocysteine + 3 H(+). It carries out the reaction N-terminal L-prolyl-L-prolyl-L-lysyl-[protein] + 2 S-adenosyl-L-methionine = N-terminal N,N-dimethyl-L-prolyl-L-prolyl-L-lysyl-[protein] + 2 S-adenosyl-L-homocysteine + 2 H(+). Its function is as follows. Alpha-N-methyltransferase that methylates the N-terminus of target proteins containing the N-terminal motif [Ala/Pro/Ser]-Pro-Lys when the initiator Met is cleaved. Specifically catalyzes mono-, di- or tri-methylation of exposed alpha-amino group of Ala or Ser residue in the [Ala/Ser]-Pro-Lys motif and mono- or di-methylation of Pro in the Pro-Pro-Lys motif. This Schizosaccharomyces pombe (strain 972 / ATCC 24843) (Fission yeast) protein is Alpha N-terminal protein methyltransferase 1 (tae1).